We begin with the raw amino-acid sequence, 276 residues long: Acyl-[acyl-carrier-protein]--UDP-N-acetylglucosamine O-acyltransferase (276 aa).

This sequence belongs to the transferase hexapeptide repeat family. LpxA subfamily. As to quaternary structure, homotrimer.

It is found in the cytoplasm. It carries out the reaction a (3R)-hydroxyacyl-[ACP] + UDP-N-acetyl-alpha-D-glucosamine = a UDP-3-O-[(3R)-3-hydroxyacyl]-N-acetyl-alpha-D-glucosamine + holo-[ACP]. Its pathway is glycolipid biosynthesis; lipid IV(A) biosynthesis; lipid IV(A) from (3R)-3-hydroxytetradecanoyl-[acyl-carrier-protein] and UDP-N-acetyl-alpha-D-glucosamine: step 1/6. Functionally, involved in the biosynthesis of lipid A, a phosphorylated glycolipid that anchors the lipopolysaccharide to the outer membrane of the cell. This Synechocystis sp. (strain ATCC 27184 / PCC 6803 / Kazusa) protein is Acyl-[acyl-carrier-protein]--UDP-N-acetylglucosamine O-acyltransferase.